The following is a 125-amino-acid chain: Histone H2A (125 aa).

The segment covering 1-18 (MSGRGKGGKAKAKAKSRS) has biased composition (basic residues). Residues 1 to 21 (MSGRGKGGKAKAKAKSRSSRA) are disordered. Serine 2 is subject to N-acetylserine. Glutamine 104 bears the N5-methylglutamine mark.

Belongs to the histone H2A family. As to quaternary structure, the nucleosome is a histone octamer containing two molecules each of H2A, H2B, H3 and H4 assembled in one H3-H4 heterotetramer and two H2A-H2B heterodimers. The octamer wraps approximately 147 bp of DNA.

It localises to the nucleus. The protein localises to the chromosome. Its function is as follows. Core component of nucleosome. Nucleosomes wrap and compact DNA into chromatin, limiting DNA accessibility to the cellular machineries which require DNA as a template. Histones thereby play a central role in transcription regulation, DNA repair, DNA replication and chromosomal stability. DNA accessibility is regulated via a complex set of post-translational modifications of histones, also called histone code, and nucleosome remodeling. In Mytilus californianus (California mussel), this protein is Histone H2A.